The following is a 110-amino-acid chain: UPF0060 membrane protein ASA_2267 (110 aa).

4 helical membrane passes run isoleucine 7–tryptophan 27, serine 33–leucine 53, alanine 63–isoleucine 83, and leucine 87–proline 107.

The protein belongs to the UPF0060 family.

It localises to the cell inner membrane. The polypeptide is UPF0060 membrane protein ASA_2267 (Aeromonas salmonicida (strain A449)).